Consider the following 310-residue polypeptide: uncharacterized protein (310 aa).

Disordered stretches follow at residues Leu-22–His-163 and Glu-178–Asp-209. Composition is skewed to basic and acidic residues over residues Ile-56–Pro-66 and Thr-183–Ala-197. Residues Ala-198 to Asp-209 show a composition bias toward low complexity. 3 consecutive transmembrane segments (helical) span residues Ala-231–Phe-251, Trp-257–Val-277, and Ile-286–Leu-306.

This sequence to M.leprae ML2433.

The protein localises to the cell membrane. This is an uncharacterized protein from Mycobacterium tuberculosis (strain CDC 1551 / Oshkosh).